The primary structure comprises 211 residues: dITP/XTP pyrophosphatase (211 aa).

7–12 contacts substrate; it reads TSNKKK. Mg(2+)-binding residues include Glu43 and Asp72. Asp72 serves as the catalytic Proton acceptor. Substrate-binding positions include Ser73, 169 to 172, Lys190, and 195 to 196; these read FGYD and HR.

It belongs to the HAM1 NTPase family. Homodimer. Requires Mg(2+) as cofactor.

The enzyme catalyses XTP + H2O = XMP + diphosphate + H(+). It catalyses the reaction dITP + H2O = dIMP + diphosphate + H(+). The catalysed reaction is ITP + H2O = IMP + diphosphate + H(+). Pyrophosphatase that catalyzes the hydrolysis of nucleoside triphosphates to their monophosphate derivatives, with a high preference for the non-canonical purine nucleotides XTP (xanthosine triphosphate), dITP (deoxyinosine triphosphate) and ITP. Seems to function as a house-cleaning enzyme that removes non-canonical purine nucleotides from the nucleotide pool, thus preventing their incorporation into DNA/RNA and avoiding chromosomal lesions. The sequence is that of dITP/XTP pyrophosphatase from Hydrogenobaculum sp. (strain Y04AAS1).